The sequence spans 187 residues: Elongation factor P (187 aa).

Belongs to the elongation factor P family.

It localises to the cytoplasm. It functions in the pathway protein biosynthesis; polypeptide chain elongation. Functionally, involved in peptide bond synthesis. Stimulates efficient translation and peptide-bond synthesis on native or reconstituted 70S ribosomes in vitro. Probably functions indirectly by altering the affinity of the ribosome for aminoacyl-tRNA, thus increasing their reactivity as acceptors for peptidyl transferase. The protein is Elongation factor P of Roseiflexus castenholzii (strain DSM 13941 / HLO8).